The sequence spans 165 residues: Neurotrophin-3 (165 aa).

Positions 1–3 are cleaved as a signal peptide; it reads IQS. Positions 4-119 are excised as a propeptide; it reads TSMDQGSLSE…VLTXTSXXXR (116 aa).

Belongs to the NGF-beta family.

The protein localises to the secreted. In terms of biological role, seems to promote the survival of visceral and proprioceptive sensory neurons. This Tropidophis haetianus (Haitian dwarf boa) protein is Neurotrophin-3 (NTF3).